A 311-amino-acid polypeptide reads, in one-letter code: Pyrimidine-specific ribonucleoside hydrolase RihA (311 aa).

Residue His-240 is part of the active site.

Belongs to the IUNH family. RihA subfamily.

In terms of biological role, hydrolyzes with equal efficiency cytidine or uridine to ribose and cytosine or uracil, respectively. The protein is Pyrimidine-specific ribonucleoside hydrolase RihA of Escherichia coli O45:K1 (strain S88 / ExPEC).